The following is a 336-amino-acid chain: C4-dicarboxylate-binding periplasmic protein DctP (336 aa).

The first 31 residues, 1–31 (MTRLNTCTFIKQIVKMTSIAALLGASLNSWA), serve as a signal peptide directing secretion. (S)-malate contacts are provided by Lys48, Lys101, Arg176, Asn216, Asn220, and Tyr243. Residues Lys48, Lys101, Arg176, Asn216, Asn220, and Tyr243 each coordinate succinate.

It belongs to the bacterial solute-binding protein 7 family. The complex comprises the extracytoplasmic solute receptor protein DctP, and the two transmembrane proteins DctQ and DctM.

It localises to the periplasm. In terms of biological role, part of the tripartite ATP-independent periplasmic (TRAP) transport system DctPQM involved in C4-dicarboxylates uptake. Required for the utilization of succinate, fumarate, L-malate and alpha-ketoglutarate. Binds succinate and malate. The sequence is that of C4-dicarboxylate-binding periplasmic protein DctP from Shewanella loihica (strain ATCC BAA-1088 / PV-4).